The primary structure comprises 693 residues: Elongation factor G (693 aa).

A tr-type G domain is found at 8–282 (EKTRNIGIMA…AVIDYLPSPL (275 aa)). Residues 17–24 (AHIDAGKT), 81–85 (DTPGH), and 135–138 (NKMD) each bind GTP.

It belongs to the TRAFAC class translation factor GTPase superfamily. Classic translation factor GTPase family. EF-G/EF-2 subfamily.

Its subcellular location is the cytoplasm. Functionally, catalyzes the GTP-dependent ribosomal translocation step during translation elongation. During this step, the ribosome changes from the pre-translocational (PRE) to the post-translocational (POST) state as the newly formed A-site-bound peptidyl-tRNA and P-site-bound deacylated tRNA move to the P and E sites, respectively. Catalyzes the coordinated movement of the two tRNA molecules, the mRNA and conformational changes in the ribosome. The sequence is that of Elongation factor G from Staphylococcus aureus (strain Newman).